Consider the following 418-residue polypeptide: Isocitrate dehydrogenase [NADP] (418 aa).

Threonine 106 contributes to the NADP(+) binding site. D-threo-isocitrate-binding residues include serine 115, asparagine 117, arginine 121, arginine 131, and arginine 155. Position 115 is a phosphoserine (serine 115). At threonine 193 the chain carries Phosphothreonine. Aspartate 309 is a binding site for Mg(2+). NADP(+) contacts are provided by residues 341–347, asparagine 354, tyrosine 393, and arginine 397; that span reads HGTAPKY.

This sequence belongs to the isocitrate and isopropylmalate dehydrogenases family. As to quaternary structure, homodimer. Mg(2+) serves as cofactor. Requires Mn(2+) as cofactor.

It is found in the secreted. The catalysed reaction is D-threo-isocitrate + NADP(+) = 2-oxoglutarate + CO2 + NADPH. Functionally, catalyzes the oxidative decarboxylation of isocitrate to 2-oxoglutarate and carbon dioxide with the concomitant reduction of NADP(+). This Pseudomonas aeruginosa (strain UCBPP-PA14) protein is Isocitrate dehydrogenase [NADP] (icd).